Consider the following 910-residue polypeptide: Leucine--tRNA ligase (910 aa).

The 'HIGH' region motif lies at 50–60 (PYTNGSLHVGH). The 'KMSKS' region motif lies at 611 to 615 (KISKS). Lys614 serves as a coordination point for ATP.

Belongs to the class-I aminoacyl-tRNA synthetase family.

The protein resides in the cytoplasm. It carries out the reaction tRNA(Leu) + L-leucine + ATP = L-leucyl-tRNA(Leu) + AMP + diphosphate. This Thermoplasma volcanium (strain ATCC 51530 / DSM 4299 / JCM 9571 / NBRC 15438 / GSS1) protein is Leucine--tRNA ligase.